The following is a 123-amino-acid chain: Integration host factor subunit alpha (123 aa).

The tract at residues 97-123 is disordered; the sequence is NANGTASSMSSSANAAAGDKSESASGT. Residues 102–113 show a composition bias toward low complexity; sequence ASSMSSSANAAA.

Belongs to the bacterial histone-like protein family. As to quaternary structure, heterodimer of an alpha and a beta chain.

In terms of biological role, this protein is one of the two subunits of integration host factor, a specific DNA-binding protein that functions in genetic recombination as well as in transcriptional and translational control. The protein is Integration host factor subunit alpha of Rhodopseudomonas palustris (strain HaA2).